Consider the following 343-residue polypeptide: Dual oxidase maturation factor 1 (343 aa).

Over 1–24 (MATLGHTFPFYAGPKPTFPMDTTL) the chain is Extracellular. The helical transmembrane segment at 25 to 45 (ASIIMIFLTALATFIVILPGI) threads the bilayer. Over 46–51 (RGKTRL) the chain is Cytoplasmic. A helical transmembrane segment spans residues 52–72 (FWLLRVVTSLFIGAAILAVNF). The Extracellular segment spans residues 73 to 183 (SSEWSVGQVS…RLAGHYTSAM (111 aa)). N-linked (GlcNAc...) asparagine glycosylation is found at asparagine 84, asparagine 109, and asparagine 121. Residues 184–204 (LWVAFLCWLLANVMLSMPVLV) traverse the membrane as a helical segment. Topologically, residues 205-206 (YG) are cytoplasmic. Residues 207–227 (GYMLLATGIFQLLALLFFSMA) traverse the membrane as a helical segment. The Extracellular segment spans residues 228–249 (TSLTSPCPLHLGASVLHTHHGP). A helical transmembrane segment spans residues 250 to 270 (AFWITLTTGLLCVLLGLAMAV). The Cytoplasmic portion of the chain corresponds to 271–343 (AHRMQPHRLK…AHPKDPDCAL (73 aa)). The disordered stretch occupies residues 306 to 343 (RYRSMADSPKSQDIPLSEASSTKAYCKEAHPKDPDCAL). A compositionally biased stretch (basic and acidic residues) spans 330-343 (YCKEAHPKDPDCAL).

It belongs to the DUOXA family. May interact with NUMB. As to expression, specifically expressed in thyroid gland. Also detected in esophagus.

Its subcellular location is the membrane. Functionally, may be required for the maturation and the transport from the endoplasmic reticulum to the plasma membrane of functional DUOX1. The polypeptide is Dual oxidase maturation factor 1 (DUOXA1) (Homo sapiens (Human)).